We begin with the raw amino-acid sequence, 227 residues long: Ribose-5-phosphate isomerase A (227 aa).

Residues 26–29 (TGST), 82–85 (DGAD), and 95–98 (KGGG) each bind substrate. Catalysis depends on E104, which acts as the Proton acceptor. K122 lines the substrate pocket.

This sequence belongs to the ribose 5-phosphate isomerase family. In terms of assembly, homodimer.

The enzyme catalyses aldehydo-D-ribose 5-phosphate = D-ribulose 5-phosphate. It functions in the pathway carbohydrate degradation; pentose phosphate pathway; D-ribose 5-phosphate from D-ribulose 5-phosphate (non-oxidative stage): step 1/1. Functionally, catalyzes the reversible conversion of ribose-5-phosphate to ribulose 5-phosphate. The sequence is that of Ribose-5-phosphate isomerase A from Streptococcus equi subsp. zooepidemicus (strain MGCS10565).